A 207-amino-acid polypeptide reads, in one-letter code: Uracil phosphoribosyltransferase (207 aa).

5-phospho-alpha-D-ribose 1-diphosphate contacts are provided by residues R77, R102, and D129–S137. Residues I192 and G197–A199 contribute to the uracil site. Residue D198 participates in 5-phospho-alpha-D-ribose 1-diphosphate binding.

Belongs to the UPRTase family. Requires Mg(2+) as cofactor.

It catalyses the reaction UMP + diphosphate = 5-phospho-alpha-D-ribose 1-diphosphate + uracil. The protein operates within pyrimidine metabolism; UMP biosynthesis via salvage pathway; UMP from uracil: step 1/1. With respect to regulation, allosterically activated by GTP. Its function is as follows. Catalyzes the conversion of uracil and 5-phospho-alpha-D-ribose 1-diphosphate (PRPP) to UMP and diphosphate. The sequence is that of Uracil phosphoribosyltransferase from Dictyoglomus turgidum (strain DSM 6724 / Z-1310).